The primary structure comprises 157 residues: Probable calcium-binding protein CML23 (157 aa).

EF-hand domains follow at residues 11 to 46, 47 to 82, 86 to 121, and 122 to 157; these read GSME…LSPN, ASQE…SDQS, SAIR…LGEK, and CSIQ…NGSA. 19 residues coordinate Ca(2+): aspartate 24, asparagine 26, aspartate 28, lysine 30, glutamate 35, aspartate 60, aspartate 62, asparagine 64, glutamate 71, aspartate 99, aspartate 101, asparagine 103, arginine 105, glutamate 110, aspartate 135, aspartate 137, aspartate 139, cysteine 141, and glutamate 146.

In terms of biological role, potential calcium sensor. In Arabidopsis thaliana (Mouse-ear cress), this protein is Probable calcium-binding protein CML23 (CML23).